Consider the following 657-residue polypeptide: Matrix metalloproteinase-15 (657 aa).

Positions 1 to 36 (MGSDRSALGRPGCTGSCLSSRASLLPLLLVLLDCLG) are cleaved as a signal peptide. Positions 37–127 (HGTASKDAEV…KANLRRRRKR (91 aa)) are excised as a propeptide. The Cysteine switch signature appears at 105–112 (PRCGVPDQ). A Zn(2+)-binding site is contributed by Cys107. Residues 128-614 (YTLTGKAWNN…MEEVVRTVNV (487 aa)) are Extracellular-facing. An N-linked (GlcNAc...) asparagine glycan is attached at Asn146. A Zn(2+)-binding site is contributed by His255. Glu256 is a catalytic residue. Zn(2+) is bound by residues His259 and His265. The tract at residues 295 to 365 (IQQLYGSPDG…ERPDQYGPNI (71 aa)) is disordered. Over residues 328 to 337 (PRPPQPPHPG) the composition is skewed to pro residues. Hemopexin repeat units lie at residues 363 to 411 (PNIC…WRGL), 412 to 457 (PGNI…GTDI), 459 to 507 (YDRI…QGIP), and 508 to 555 (TSPK…FMGC). A disulfide bond links Cys366 and Cys555. A glycan (N-linked (GlcNAc...) asparagine) is linked at Asn414. The interval 561–599 (PRSRWPDVARPPFNPNGGAEPEADGDSKEENAGDKDEGS) is disordered. Positions 585 to 599 (GDSKEENAGDKDEGS) are enriched in basic and acidic residues. Residues 615-635 (VMVLVPLLLLLCILGLAFALV) traverse the membrane as a helical segment. Residues 636–657 (QMQRKGAPRMLLYCKRSLQEWV) lie on the Cytoplasmic side of the membrane.

The protein belongs to the peptidase M10A family. Zn(2+) serves as cofactor. Ca(2+) is required as a cofactor. Post-translationally, the precursor is cleaved by a furin endopeptidase.

The protein resides in the membrane. In terms of biological role, endopeptidase that degrades various components of the extracellular matrix. May activate progelatinase A. The protein is Matrix metalloproteinase-15 (Mmp15) of Mus musculus (Mouse).